Reading from the N-terminus, the 272-residue chain is Pyrroline-5-carboxylate reductase (272 aa).

It belongs to the pyrroline-5-carboxylate reductase family.

It is found in the cytoplasm. It carries out the reaction L-proline + NADP(+) = (S)-1-pyrroline-5-carboxylate + NADPH + 2 H(+). It catalyses the reaction L-proline + NAD(+) = (S)-1-pyrroline-5-carboxylate + NADH + 2 H(+). It participates in amino-acid biosynthesis; L-proline biosynthesis; L-proline from L-glutamate 5-semialdehyde: step 1/1. Its function is as follows. Catalyzes the reduction of 1-pyrroline-5-carboxylate (PCA) to L-proline. This is Pyrroline-5-carboxylate reductase from Vibrio alginolyticus.